A 185-amino-acid polypeptide reads, in one-letter code: MISDIRKDAEVRMEKCVEAFKTQISKVRTGRASPSLLDGIVVEYYGTLTPLRQLASVTVEDSRTLKINVFDRSMGPAVEKAIMASDLGLNPSSAGTDICVPLPPLTEERRKDLTKIVRGEAEQARVAVRNVRRDANDKVKALLKDKAISEDDDRRSQEEVQKMTDAAIKKVDAALADKEAELMQF.

It belongs to the RRF family.

The protein localises to the cytoplasm. Its function is as follows. Responsible for the release of ribosomes from messenger RNA at the termination of protein biosynthesis. May increase the efficiency of translation by recycling ribosomes from one round of translation to another. The chain is Ribosome-recycling factor from Salmonella paratyphi A (strain ATCC 9150 / SARB42).